The primary structure comprises 5193 residues: Usherin (5193 aa).

A signal peptide spans 1 to 34 (MHYLALSPGFLCYTIKTLILAYLASVLVLAASQG). Over 35-5033 (VFPRLENVGA…KSTEFYSELW (4999 aa)) the chain is Extracellular. 7 N-linked (GlcNAc...) asparagine glycosylation sites follow: N230, N258, N274, N358, N415, N448, and N469. Positions 268 to 514 (QDFRLYNVSL…AVDEIIVSGR (247 aa)) constitute a Laminin N-terminal domain. Intrachain disulfides connect C515–C524, C517–C533, C535–C546, C549–C569, C572–C581, C574–C602, C605–C614, C617–C635, C638–C652, C640–C659, C661–C670, C673–C688, C691–C705, C693–C712, C714–C723, C726–C741, C744–C756, C746–C763, C765–C774, C777–C789, C792–C805, C794–C812, C814–C823, and C826–C846. Laminin EGF-like domains follow at residues 515 to 571 (CQCH…NCKP), 572 to 637 (CQCH…ACKL), 638 to 690 (CDCN…GCRP), 691 to 743 (CNCN…GCEP), 744 to 791 (CQCN…ACEV), 792 to 848 (CDCS…NCEK), 853 to 896 (NGSL…GCQA), 897 to 947 (CDCD…GCLP), 948 to 998 (CLCH…RCRP), and 999 to 1049 (CHCH…GCSK). N-linked (GlcNAc...) asparagine glycosylation occurs at N647. N836 and N853 each carry an N-linked (GlcNAc...) asparagine glycan. 14 disulfides stabilise this stretch: C867-C876, C879-C894, C897-C910, C899-C917, C919-C928, C931-C945, C948-C960, C950-C967, C969-C979, C982-C996, C999-C1011, C1001-C1018, C1020-C1029, and C1032-C1047. N885 carries N-linked (GlcNAc...) asparagine glycosylation. N-linked (GlcNAc...) asparagine glycosylation occurs at N941. N1008 carries an N-linked (GlcNAc...) asparagine glycan. 5 consecutive Fibronectin type-III domains span residues 1055 to 1143 (PPPR…TKPE), 1147 to 1241 (GHLN…APPQ), 1242 to 1357 (TQGP…SVPV), 1358 to 1462 (FMAP…AAPA), and 1463 to 1566 (QLRP…LQLK). 5 N-linked (GlcNAc...) asparagine glycosylation sites follow: N1068, N1089, N1150, N1171, and N1222. N1382, N1473, and N1626 each carry an N-linked (GlcNAc...) asparagine glycan. Laminin G-like domains lie at 1511-1700 (TKGT…WEGC) and 1705-1882 (EEGV…QDGC). C1663 and C1700 are disulfide-bonded. N1770 carries an N-linked (GlcNAc...) asparagine glycan. Fibronectin type-III domains follow at residues 1847–1946 (EPGF…TAPQ), 1948–2045 (VPTP…TPQE), 2046–2132 (APQE…TAQL), 2133–2234 (PPEQ…IPEG), 2235–2321 (VPAP…APPE), 2322–2421 (GVVN…SVEM), 2422–2525 (PPGA…DKPG), 2526–2613 (PIDA…TLPG), 2617–2713 (GIPS…TRPC), 2717–2810 (GVQP…THPA), 2811–2914 (PPQE…TLAG), 2918–3009 (RGAT…MWEE), and 3013–3103 (GMLP…TPSD). A disulfide bridge connects residues C1853 and C1882. An N-linked (GlcNAc...) asparagine glycan is attached at N1894. The tract at residues 1931 to 1955 (VSSDWSRGRTLGTAPQSVPTPSRAQ) is disordered. Residues 1943 to 1955 (TAPQSVPTPSRAQ) show a composition bias toward polar residues. N-linked (GlcNAc...) asparagine glycans are attached at residues N1958, N2095, N2121, N2177, N2186, N2249, N2276, N2313, N2368, and N2404. 5 N-linked (GlcNAc...) asparagine glycosylation sites follow: N2575, N2647, N2701, N2761, and N2779. N-linked (GlcNAc...) asparagine glycosylation is found at N2928, N2998, N3023, N3090, N3208, N3322, and N3411. Fibronectin type-III domains follow at residues 3395–3489 (CPAT…TRED), 3490–3580 (VPEG…TTQR), 3581–3671 (SPEN…TLQA), 3672–3766 (APQG…TPED), 3769–3857 (PPCN…TLEA), 3858–3955 (APVG…TLEA), 3956–4059 (PPRG…SAPS), 4060–4148 (GLMN…APPD), 4149–4256 (TQMA…APPD), 4257–4346 (GLSP…TPEV), 4347–4437 (PPSE…APPE), 4438–4522 (NMDP…TSPS), 4523–4625 (APSG…VPPL), 4628–4725 (PAPH…TGPA), 4726–4818 (PPEG…THPA), 4819–4921 (PPSG…TKKE), and 4922–5005 (MPQY…YDAA). 6 N-linked (GlcNAc...) asparagine glycosylation sites follow: N3589, N3645, N3686, N3712, N3723, and N3772. N3976, N4063, N4194, N4218, N4304, N4340, N4365, and N4410 each carry an N-linked (GlcNAc...) asparagine glycan. N4556, N4575, N4683, N4716, N4746, N4756, N4765, N4915, and N4934 each carry an N-linked (GlcNAc...) asparagine glycan. The helical transmembrane segment at 5034–5054 (FIMVMAVVGLILLAIFLSLIL) threads the bilayer. Topologically, residues 5055–5193 (QRKIHKEPCI…EHTAFTDTHL (139 aa)) are cytoplasmic. The PDZ-binding motif lies at 5191–5193 (THL).

In terms of assembly, interacts with collagen IV and fibronectin via its laminin EGF-like domains. Interaction with collagen may be required for stable integration into the basement membrane. Interacts with NINL. Interacts with USH1C. Component of USH2 complex, composed of ADGRV1, PDZD7, USH2A and WHRN. Interacts with ADGRV1/MASS1 (via N-terminal PDZ domain). Interacts (via the cytoplasmic region) with WHRN. Interacts (via the cytoplasmic region) with PDZD7. Interacts (via the cytoplasmic region) with VEZT and MYO7A (via MyTH4-FERM domains); the interaction associates VEZT with the USH2 complex at the stereocilia base. Present in the testis, epididymis, oviduct, spleen, submaxillary gland, and small and large intestines. Not detected in the brain, skin, lung, skeletal muscle, cardiac muscle, liver or kidney. Expressed in smooth muscle of the colon and the epididymis. Also present in select vascular basement membranes. In the cochlea, it is present in virtually every basement membrane. It is particularly high in the strial capillary basement membranes (SCBMs). In the retina, it is again expressed in all of the basement membranes. It is also very prevalent in the lens capsule and the Bruch's layer between the retinal pigment epithelium and the choroid layer, which is very rich in basement membranes. In neonates in it is widely expressed in the basement membranes of the cochlea. Present in the synaptic terminals of retinal photoreceptors (at protein level).

It localises to the cell projection. Its subcellular location is the stereocilium membrane. The protein resides in the photoreceptor inner segment. It is found in the secreted. Involved in hearing and vision as member of the USH2 complex. In the inner ear, required for the maintenance of hair bundle ankle formation, which connects growing stereocilia in developing cochlear hair cells. In retina photoreceptors, the USH2 complex is required for the maintenance of periciliary membrane complex that seems to play a role in regulating intracellular protein transport. In Mus musculus (Mouse), this protein is Usherin (Ush2A).